Consider the following 118-residue polypeptide: Ribosome-binding factor A (118 aa).

Belongs to the RbfA family. As to quaternary structure, monomer. Binds 30S ribosomal subunits, but not 50S ribosomal subunits or 70S ribosomes.

The protein localises to the cytoplasm. Functionally, one of several proteins that assist in the late maturation steps of the functional core of the 30S ribosomal subunit. Associates with free 30S ribosomal subunits (but not with 30S subunits that are part of 70S ribosomes or polysomes). Required for efficient processing of 16S rRNA. May interact with the 5'-terminal helix region of 16S rRNA. The chain is Ribosome-binding factor A from Thermodesulfovibrio yellowstonii (strain ATCC 51303 / DSM 11347 / YP87).